A 152-amino-acid chain; its full sequence is UPF0178 protein KPN78578_03210 (152 aa).

The protein belongs to the UPF0178 family.

In Klebsiella pneumoniae subsp. pneumoniae (strain ATCC 700721 / MGH 78578), this protein is UPF0178 protein KPN78578_03210.